The sequence spans 146 residues: Small ribosomal subunit protein uS9 (146 aa).

It belongs to the universal ribosomal protein uS9 family. As to quaternary structure, component of the small ribosomal subunit.

Its subcellular location is the cytoplasm. Its function is as follows. Component of the small ribosomal subunit. The ribosome is a large ribonucleoprotein complex responsible for the synthesis of proteins in the cell. The protein is Small ribosomal subunit protein uS9 (rps16) of Ictalurus punctatus (Channel catfish).